The following is a 344-amino-acid chain: Lysophosphatidic acid receptor 6 (344 aa).

At 1–25 (MVSSNGSQCPYDDSFKYTLYGCMFS) the chain is on the extracellular side. Residue Asn5 is glycosylated (N-linked (GlcNAc...) asparagine). A helical transmembrane segment spans residues 26-46 (MVFVLGLISNCVAIYIFICAL). Over 47–56 (KVRNETTTYM) the chain is Cytoplasmic. A helical transmembrane segment spans residues 57-77 (INLAMSDLLFVFTLPFRIFYF). Over 78-90 (ATRNWPFGDLLCK) the chain is Extracellular. Residues Cys89 and Cys168 are joined by a disulfide bond. A helical membrane pass occupies residues 91–111 (ISVMLFYTNMYGSILFLTCIS). The Cytoplasmic portion of the chain corresponds to 112-134 (VDRFLAIVYPFKSKTLRTKRNAK). The helical transmembrane segment at 135–155 (IVCIAVWFTVMGGSAPAVFFQ) threads the bilayer. The Extracellular portion of the chain corresponds to 156-183 (STHSQGNNTSEACFENFPAATWKTYLSR). Asn162 and Asn163 each carry an N-linked (GlcNAc...) asparagine glycan. The chain crosses the membrane as a helical span at residues 184-204 (IVIFIEIVGFFIPLILNVTCS). Residues 205-230 (SMVLRTLNKPVTLSRSKMNKTKVLKM) are Cytoplasmic-facing. Residues 231–251 (IFVHLVIFCFCFVPYNINLIL) form a helical membrane-spanning segment. At 252–272 (YSLMRTQTFVNCSVVAAVRTM) the chain is on the extracellular side. Asn262 carries N-linked (GlcNAc...) asparagine glycosylation. A helical transmembrane segment spans residues 273–293 (YPITLCIAVSNCCFDPIVYYF). Residue Cys284 is the site of S-palmitoyl cysteine attachment. Residues 294-344 (TSDTIQNSIKMKNWSVRRSDSRFSEVQGTENFIQHNLQTLKNKIFDNESAI) are Cytoplasmic-facing.

It belongs to the G-protein coupled receptor 1 family. Ubiquitously expressed. Detected in the hair follicles and skin (at protein level).

It is found in the cell membrane. In terms of biological role, binds to oleoyl-L-alpha-lysophosphatidic acid (LPA). Intracellular cAMP is involved in the receptor activation. Important for the maintenance of hair growth and texture. In Mus musculus (Mouse), this protein is Lysophosphatidic acid receptor 6 (Lpar6).